Here is a 136-residue protein sequence, read N- to C-terminus: MKIIDASNTVYGRLSAYVAKQLLNGEEVVIVNASKAVITGDRKFIIDKFKQRLDIGSVRKGPYYPKTPENILRRSIGDMLPKKITRGKEALSRCKVYRNLPKNVSSEKIEKVDDVMTDKVVGIITLEELSKELGGM.

The protein belongs to the universal ribosomal protein uL13 family. As to quaternary structure, part of the 50S ribosomal subunit.

Its function is as follows. This protein is one of the early assembly proteins of the 50S ribosomal subunit, although it is not seen to bind rRNA by itself. It is important during the early stages of 50S assembly. The chain is Large ribosomal subunit protein uL13 from Thermoplasma volcanium (strain ATCC 51530 / DSM 4299 / JCM 9571 / NBRC 15438 / GSS1).